The primary structure comprises 191 residues: RNA pyrophosphohydrolase (191 aa).

The Nudix hydrolase domain maps to Gly6–Ser149. The Nudix box signature appears at Gly38–Gly59. The interval Gly162–Arg191 is disordered.

The protein belongs to the Nudix hydrolase family. RppH subfamily. Requires a divalent metal cation as cofactor.

In terms of biological role, accelerates the degradation of transcripts by removing pyrophosphate from the 5'-end of triphosphorylated RNA, leading to a more labile monophosphorylated state that can stimulate subsequent ribonuclease cleavage. The sequence is that of RNA pyrophosphohydrolase from Methylococcus capsulatus (strain ATCC 33009 / NCIMB 11132 / Bath).